A 662-amino-acid chain; its full sequence is Aprataxin-like protein (662 aa).

Residues 4–108 form the HIT domain; the sequence is SSALIKDISK…ISKDFVSTSL (105 aa). Residues 381–403 form a C2H2-type zinc finger; sequence LRCNQCEFVTNMLLDLKAHLYQH. Positions 482–662 are disordered; the sequence is KNINGPSVNM…PAPPSNSKPS (181 aa). The segment covering 490 to 500 has biased composition (low complexity); sequence NMMNQNNPNNP. 2 stretches are compositionally biased toward polar residues: residues 501–513 and 560–569; these read FRNTPHLNRQSQK and GHQQFPNASS. The span at 570–582 shows a compositional bias: gly residues; it reads VGGGQTGLPGQGQ. Residues 588–599 are compositionally biased toward polar residues; that stretch reads WNSNKIFNQQNR. Positions 600-626 are enriched in low complexity; that stretch reads QNTVQAQPQAQNQQTNQQQIQNSNKNQ. The segment covering 653–662 has biased composition (pro residues); the sequence is PAPPSNSKPS.

Its subcellular location is the nucleus. Its function is as follows. DNA-binding protein involved in single-strand DNA break repair, double-strand DNA break repair and base excision repair. Resolves abortive DNA ligation intermediates formed either at base excision sites, or when DNA ligases attempt to repair non-ligatable breaks induced by reactive oxygen species. Catalyzes the release of adenylate groups covalently linked to 5'-phosphate termini, resulting in the production of 5'-phosphate termini that can be efficiently rejoined. The polypeptide is Aprataxin-like protein (Drosophila melanogaster (Fruit fly)).